A 476-amino-acid chain; its full sequence is Amino acid permease 3 (476 aa).

Residues 1 to 33 are Cytoplasmic-facing; it reads MVQNHQTVLAVDMPQTGGSKYLDDDGKNKRTGS. A helical membrane pass occupies residues 34 to 54; the sequence is VWTASAHIITAVIGSGVLSLA. At 55–57 the chain is on the extracellular side; the sequence is WAT. A helical transmembrane segment spans residues 58-78; it reads AQLGWLAGPVVMLLFSAVTYF. Over 79–122 the chain is Cytoplasmic; that stretch reads TSSLLAACYRSGDPISGKRNYTYMDAVRSNLGGVKVTLCGIVQY. A helical transmembrane segment spans residues 123-143; the sequence is LNIFGVAIGYTIASAISMMAI. Over 144 to 166 the chain is Extracellular; the sequence is KRSNCFHKSGGKDPCHMNSNPYM. Transmembrane regions (helical) follow at residues 167–187 and 188–208; these read IAFG…QLWW and LSIL…ALGI. Residues 209-277 are Extracellular-facing; it reads AQVVVNGKVK…EEKTMKKATL (69 aa). The helical transmembrane segment at 278 to 298 threads the bilayer; the sequence is VSVSVTTMFYMLCGCMGYAAF. Over 299–300 the chain is Cytoplasmic; sequence GD. Residues 301–321 traverse the membrane as a helical segment; that stretch reads LSPGNLLTGFGFYNPYWLLDI. Topologically, residues 322–324 are extracellular; that stretch reads ANA. Residues 325 to 345 form a helical membrane-spanning segment; it reads AIVIHLIGAYQVYCQPLFAFI. Residues 346–384 lie on the Cytoplasmic side of the membrane; that stretch reads EKQASIQFPDSEFIAKDIKIPIPGFKPLRLNVFRLIWRT. 2 consecutive transmembrane segments (helical) span residues 385–405 and 406–426; these read VFVI…DVVG and LLGA…MYIA. The Cytoplasmic segment spans residues 427-441; it reads QKKIPRWSTRWVCLQ. A helical transmembrane segment spans residues 442-462; that stretch reads VFSLGCLVVSIAAAAGSIAGV. The Extracellular segment spans residues 463-476; the sequence is LLDLKSYKPFRSEY.

This sequence belongs to the amino acid/polyamine transporter 2 family. Amino acid/auxin permease (AAAP) (TC 2.A.18.2) subfamily. Expressed in the root phloem. Detected in stamens, in cotyledons, and in major veins of mature leaves.

The protein localises to the cell membrane. Its subcellular location is the nucleus membrane. It localises to the endomembrane system. Inhibited by carbonylcyanide m-chlorophenylhydrazone and 2,4-dinitrophenol. In terms of biological role, amino acid-proton symporter. Stereospecific transporter with a broad specificity for GABA, tryptophan and both neutral and basic amino acids. High affinity transport of cationic amino acids. The protein is Amino acid permease 3 (AAP3) of Arabidopsis thaliana (Mouse-ear cress).